Consider the following 346-residue polypeptide: Glucose-6-phosphatase 3 (346 aa).

The Lumenal segment spans residues 1–24; sequence MESTLGAGIVIAEALQNQLAWLEN. The helical transmembrane segment at 25-45 threads the bilayer; sequence VWLWITFLGDPKILFLFYFPA. Over 46–54 the chain is Cytoplasmic; it reads AYYASRRVG. The helical transmembrane segment at 55-75 threads the bilayer; sequence IAVLWISLITEWLNLIFKWFL. Residues 76 to 114 lie on the Lumenal side of the membrane; the sequence is FGDRPFWWVHESGYYSQAPAQVHQFPSSCETGPGSPSGH. Arg-79 is a substrate binding site. His-114 serves as the catalytic Proton donor. A helical transmembrane segment spans residues 115–135; sequence CMITGAALWPIMTALSSQVAT. The Cytoplasmic segment spans residues 136–146; that stretch reads RARSRWVRVMP. A helical membrane pass occupies residues 147-164; that stretch reads SLAYCTFLLAVGLSRIFI. A substrate-binding site is contributed by Arg-161. Over 165–169 the chain is Lumenal; it reads LAHFP. His-167 functions as the Nucleophile in the catalytic mechanism. A helical membrane pass occupies residues 170-186; that stretch reads HQVLAGLITGAVLGWLM. Topologically, residues 187–197 are cytoplasmic; the sequence is TPRVPMERELS. A helical transmembrane segment spans residues 198–218; it reads FYGLTALALMLGTSLIYWTLF. Over 219–254 the chain is Lumenal; it reads TLGLDLSWSISLAFKWCERPEWIHVDSRPFASLSRD. The helical transmembrane segment at 255–273 threads the bilayer; the sequence is SGAALGLGIALHSPCYAQV. Over 274–283 the chain is Cytoplasmic; sequence RRAQLGNGQK. A helical membrane pass occupies residues 284 to 304; that stretch reads IACLVLAMGLLGPLDWLGHPP. At 305-307 the chain is on the lumenal side; that stretch reads QIS. Residues 308-328 traverse the membrane as a helical segment; that stretch reads LFYIFNFLKYTLWPCLVLALV. The Cytoplasmic segment spans residues 329-346; the sequence is PWAVHMFSAQEAPPIHSS.

The protein belongs to the glucose-6-phosphatase family. In terms of tissue distribution, ubiquitously expressed. Highly expressed in skeletal muscle, at intermediate levels in heart, brain, placenta, kidney, colon, thymus, spleen and pancreas. Also detected in testis, prostate, ovary, liver, lung, small intestine and peripheral blood lymphocytes.

The protein resides in the endoplasmic reticulum membrane. It carries out the reaction D-glucose 6-phosphate + H2O = D-glucose + phosphate. Its pathway is carbohydrate biosynthesis; gluconeogenesis. Its activity is regulated as follows. Inhibited by vanadate. Hydrolyzes glucose-6-phosphate to glucose in the endoplasmic reticulum. May form with the glucose-6-phosphate transporter (SLC37A4/G6PT) a ubiquitously expressed complex responsible for glucose production through glycogenolysis and gluconeogenesis. Probably required for normal neutrophil function. In Homo sapiens (Human), this protein is Glucose-6-phosphatase 3 (G6PC3).